The sequence spans 471 residues: GTPase Der (471 aa).

EngA-type G domains lie at 3–166 (PTLA…EPEA) and 177–350 (IKLA…SSAT). GTP contacts are provided by residues 9-16 (GRPNVGKS), 56-60 (DTGGI), 118-121 (NKVD), 183-190 (GRPNVGKS), 230-234 (DTAGV), and 295-298 (NKWD). In terms of domain architecture, KH-like spans 351-435 (EKLNTNFLTK…PIRFEFKSSE (85 aa)). A disordered region spans residues 432–471 (KSSENPFAGRKNAMSKKPEHPSRRANSGGKSINRRPRPKS).

Belongs to the TRAFAC class TrmE-Era-EngA-EngB-Septin-like GTPase superfamily. EngA (Der) GTPase family. Associates with the 50S ribosomal subunit.

Functionally, GTPase that plays an essential role in the late steps of ribosome biogenesis. This is GTPase Der from Saccharophagus degradans (strain 2-40 / ATCC 43961 / DSM 17024).